We begin with the raw amino-acid sequence, 394 residues long: RHOMBOID-like protein 4 (394 aa).

The segment at 1 to 51 is disordered; sequence MGEKDSETAPIWGKTRERERSNNNNIQPMDLESSSSVSGQQRSLTQSRSSY. Residues 39 to 49 are compositionally biased toward polar residues; it reads GQQRSLTQSRS. The next 7 membrane-spanning stretches (helical) occupy residues 64-84, 147-167, 175-195, 201-221, 231-251, 254-274, and 300-320; these read WFPW…VITM, WLHG…FIGI, FIRI…LSAL, ISVG…SEIF, VVTI…GVLP, DNFA…VLLI, and ILWT…LISL. The active-site Nucleophile is Ser206. His258 serves as the catalytic Charge relay system.

The protein belongs to the peptidase S54 family.

The protein localises to the membrane. It carries out the reaction Cleaves type-1 transmembrane domains using a catalytic dyad composed of serine and histidine that are contributed by different transmembrane domains.. Probable rhomboid-type serine protease that catalyzes intramembrane proteolysis. The chain is RHOMBOID-like protein 4 from Arabidopsis thaliana (Mouse-ear cress).